We begin with the raw amino-acid sequence, 216 residues long: Ribosomal RNA small subunit methyltransferase G (216 aa).

Positions 75, 80, and 141 each coordinate S-adenosyl-L-methionine.

Belongs to the methyltransferase superfamily. RNA methyltransferase RsmG family.

It is found in the cytoplasm. It catalyses the reaction guanosine(527) in 16S rRNA + S-adenosyl-L-methionine = N(7)-methylguanosine(527) in 16S rRNA + S-adenosyl-L-homocysteine. In terms of biological role, specifically methylates the N7 position of guanine in position 527 of 16S rRNA. The polypeptide is Ribosomal RNA small subunit methyltransferase G (Nitrosospira multiformis (strain ATCC 25196 / NCIMB 11849 / C 71)).